A 1628-amino-acid polypeptide reads, in one-letter code: Centrosomal protein of 170 kDa protein B (1628 aa).

The region spanning 23–73 (IFVGREDCELMLQSRSVDKQHAVINYDSDKDEHRVKDLGSLNGTFVNDVRI) is the FHA domain. 12 disordered regions span residues 136-201 (EHGA…DMTQ), 329-369 (LIRR…SEDP), 415-504 (PRKK…GKNY), 566-586 (SDVRTGKVKNEEEDNLSDAGT), 637-659 (LASEPSVPHKPIMSSTPPVKLSN), 719-739 (EHQGEADPTVPSRTRRLLPQL), 758-842 (ESQR…KKST), 1005-1084 (VSLV…LDFT), 1100-1341 (TVSS…EDEQ), 1379-1405 (AGDGDSQSSSGTGQSTSISSVPNTPAS), 1443-1463 (GSTGLEDFDQNMNDSREDPSK), and 1560-1628 (HLDV…TYIV). Composition is skewed to basic and acidic residues over residues 147-156 (KQDKADKKAT) and 180-201 (KLDKEGRRQDEHYSERPNDMTQ). Positions 421 to 434 (QSFTHNANSPQNDT) are enriched in polar residues. Residues 436-453 (PVLKAKAEKRKGTLHVEK) are compositionally biased toward basic and acidic residues. The span at 454 to 479 (VSTNGMGSTAPASKSLSSPSFPQRSN) shows a compositional bias: polar residues. The span at 481-490 (FRREKTEDRI) shows a compositional bias: basic and acidic residues. Basic and acidic residues-rich tracts occupy residues 758 to 773 (ESQRKSLEEPEKRISE) and 817 to 828 (WKGEESHSREPS). Positions 1005 to 1023 (VSLVSDKNVPSHSQKNRIV) are enriched in polar residues. The segment covering 1045 to 1056 (ARERLSEKRRTV) has biased composition (basic and acidic residues). The segment covering 1129–1150 (RSSNAQKVQQALTRSNSLSTPR) has biased composition (polar residues). Positions 1176–1193 (SNISPGTSSANSSSAKSS) are enriched in low complexity. The segment covering 1216-1227 (NVPSDSETTSSV) has biased composition (polar residues). Low complexity-rich tracts occupy residues 1261-1280 (TQKQTPRPRSSSVKYSSSST), 1312-1328 (ASTATQTSRSSSVSRRQ), and 1381-1398 (DGDSQSSSGTGQSTSISS). Polar residues predominate over residues 1564-1596 (PSSNKKTSSTILTSNPLSRTTNNSAARTESQTP). Residues 1606–1618 (SSSSSSRSPGSSF) are compositionally biased toward low complexity.

This sequence belongs to the CEP170 family.

It localises to the cytoplasm. The protein localises to the cytoskeleton. In terms of biological role, plays a role in microtubule organization. The protein is Centrosomal protein of 170 kDa protein B (cep170b) of Xenopus tropicalis (Western clawed frog).